Here is a 197-residue protein sequence, read N- to C-terminus: Protein RESISTANCE TO PHYTOPHTHORA 1, chloroplastic (197 aa).

Residues 1-52 (MSWSLCSTHGVSSSIALTYGFRHRRRSTFRIFATSDGLEPKDDPPESPLPSS) constitute a chloroplast transit peptide. A disordered region spans residues 35-56 (SDGLEPKDDPPESPLPSSSSAL). A run of 4 helical transmembrane segments spans residues 93-113 (FEVQ…NLLF), 120-140 (LWRL…LRAR), 150-170 (LNYL…FWKS), and 173-193 (LVWS…LGWL).

Its subcellular location is the plastid. It is found in the chloroplast. The protein resides in the membrane. Plays a positive role in the immune response to the oomycetes P.brassicae, including induced oxidative burst (e.g. H(2)O(2)) and enhanced expression of defense-related genes. This is Protein RESISTANCE TO PHYTOPHTHORA 1, chloroplastic from Arabidopsis thaliana (Mouse-ear cress).